A 287-amino-acid polypeptide reads, in one-letter code: Efem/EfeO family lipoprotein (287 aa).

A signal peptide spans 1–17 (MKKLPTILLASSLLLAA). A lipid anchor (N-palmitoyl cysteine) is attached at C18. C18 carries the S-diacylglycerol cysteine lipid modification. The interval 20–50 (NNSHSDDNSNKDKQSQSSKGENKASLQKATK) is disordered. The span at 23–33 (HSDDNSNKDKQ) shows a compositional bias: basic and acidic residues.

The protein belongs to the EfeM/EfeO family.

It localises to the cell membrane. This is Efem/EfeO family lipoprotein from Staphylococcus haemolyticus (strain JCSC1435).